Reading from the N-terminus, the 64-residue chain is Large ribosomal subunit protein bL28 (64 aa).

The disordered stretch occupies residues 1 to 23 (MSKECYFTGRKTVSSNNRSHAMN). The span at 11 to 23 (KTVSSNNRSHAMN) shows a compositional bias: polar residues.

The protein belongs to the bacterial ribosomal protein bL28 family.

The polypeptide is Large ribosomal subunit protein bL28 (Lactococcus lactis subsp. cremoris (strain SK11)).